A 247-amino-acid chain; its full sequence is ATP synthase subunit a (247 aa).

The next 6 membrane-spanning stretches (helical) occupy residues 26-46 (ITNNTIILFVILIGFTFLFYV), 85-105 (YFPLVLFVFSFILFANLIGLL), 115-135 (IIFTFQIAFSLFFGITLINFF), 141-161 (FFNLFVPSGVPKPLIPFLVVI), 178-198 (FANMLAGHTLLNILSAFIFNV), and 205-225 (ISFLPLLFIVFIIVLEFCIAI).

It belongs to the ATPase A chain family. In terms of assembly, F-type ATPases have 2 components, CF(1) - the catalytic core - and CF(0) - the membrane proton channel. CF(1) has five subunits: alpha(3), beta(3), gamma(1), delta(1), epsilon(1). CF(0) has three main subunits: a, b and c.

Its subcellular location is the mitochondrion inner membrane. Mitochondrial membrane ATP synthase (F(1)F(0) ATP synthase or Complex V) produces ATP from ADP in the presence of a proton gradient across the membrane which is generated by electron transport complexes of the respiratory chain. F-type ATPases consist of two structural domains, F(1) - containing the extramembraneous catalytic core and F(0) - containing the membrane proton channel, linked together by a central stalk and a peripheral stalk. During catalysis, ATP synthesis in the catalytic domain of F(1) is coupled via a rotary mechanism of the central stalk subunits to proton translocation. Key component of the proton channel; it may play a direct role in the translocation of protons across the membrane. In Acanthamoeba castellanii (Amoeba), this protein is ATP synthase subunit a (ATP6).